Here is a 263-residue protein sequence, read N- to C-terminus: Receptor-transporting protein 1 (263 aa).

At 1 to 238 (MRIFRPWRLR…QTGSGWNFCS (238 aa)) the chain is on the cytoplasmic side. The 3CxxC-type zinc finger occupies 88-197 (ASGRFHCSWC…GEFCEACQEG (110 aa)). Residues 239–259 (IPWCLFWATVLLLIIYLQFSF) traverse the membrane as a helical segment. The Extracellular segment spans residues 260–263 (RSSV).

This sequence belongs to the TMEM7 family. Interacts with olfactory receptors. In terms of tissue distribution, expressed in testis.

The protein localises to the cell membrane. In terms of biological role, specifically promotes functional cell surface expression of olfactory receptors, but not of other GPCRs. This chain is Receptor-transporting protein 1 (RTP1), found in Homo sapiens (Human).